The sequence spans 152 residues: Ribosome maturation factor RimP (152 aa).

It belongs to the RimP family.

The protein resides in the cytoplasm. Functionally, required for maturation of 30S ribosomal subunits. The polypeptide is Ribosome maturation factor RimP (Paraburkholderia xenovorans (strain LB400)).